The primary structure comprises 43 residues: Metallothionein-2 (43 aa).

Met1 carries the post-translational modification Blocked amino end (Met).

Belongs to the metallothionein superfamily. Type 5 family.

In terms of biological role, this protein binds cations of several transition elements. Thought to be involved in metal ion homeostasis. The protein is Metallothionein-2 (MtnB) of Drosophila melanogaster (Fruit fly).